Here is a 318-residue protein sequence, read N- to C-terminus: Xanthocillin biosynthesis cluster transcription factor xanC (318 aa).

Over residues 1–27 (MHSQTTKDEQSKDDSSNEKQDAIERRR) the composition is skewed to basic and acidic residues. Residues 1-39 (MHSQTTKDEQSKDDSSNEKQDAIERRRLQNRLSQRNHRR) form a disordered region. The bZIP domain maps to 20 to 52 (QDAIERRRLQNRLSQRNHRRKIRDRIAKLQERV). A basic motif region spans residues 25 to 40 (RRRLQNRLSQRNHRRK). The tract at residues 41–48 (IRDRIAKL) is leucine-zipper. Disordered regions lie at residues 71-107 (PPAA…QRNV), 123-171 (PSSS…FSLD), and 269-318 (GRHC…SMML). 2 stretches are compositionally biased toward low complexity: residues 123–139 (PSSS…PFDL) and 147–171 (STNS…FSLD). Residues 293 to 318 (APSSTPFCPLHPSQSSSLDNYQSMML) show a composition bias toward polar residues.

It belongs to the bZIP family.

Its subcellular location is the nucleus. Its function is as follows. Transcription regulator that specifically up-regulates the gene cluster that mediates the biosynthesis of the isocyanide xanthocillin and its derivatives. In Aspergillus fumigatus (strain ATCC MYA-4609 / CBS 101355 / FGSC A1100 / Af293) (Neosartorya fumigata), this protein is Xanthocillin biosynthesis cluster transcription factor xanC.